The following is a 326-amino-acid chain: Probable cell division protein WhiA (326 aa).

The H-T-H motif DNA-binding region spans 275–308; the sequence is SLEELGQLADPPLTKDAIAGRIRRLLAMADKRAA.

This sequence belongs to the WhiA family.

Involved in cell division and chromosome segregation. This chain is Probable cell division protein WhiA, found in Thermobifida fusca (strain YX).